The chain runs to 424 residues: Fasciclin-like arabinogalactan protein 1 (424 aa).

A signal peptide spans 1–24 (MAKKMSSLIIIFNILLLLTTQTHA). FAS1 domains are found at residues 25-170 (HNVT…SRVL) and 184-323 (EMNL…DKVL). N26, N128, N160, N186, and N240 each carry an N-linked (GlcNAc...) asparagine glycan. Positions 338 to 393 (APAPAPEDGDVADSPKAAKGKAKGKKKKAAPSPDNDPFGDSDSPAEGPDGEADDAT) are disordered. The segment covering 355–366 (AKGKAKGKKKKA) has biased composition (basic residues). D396 is lipidated: GPI-anchor amidated aspartate. A propeptide spans 397–424 (AGAVRIIGGAKAGLVVSLLCLFASSWLL) (removed in mature form).

The protein belongs to the fasciclin-like AGP family. Preferentially expressed in flowers.

It is found in the secreted. Its subcellular location is the extracellular space. It localises to the apoplast. The protein resides in the cell membrane. Its function is as follows. May be a cell surface adhesion protein. The polypeptide is Fasciclin-like arabinogalactan protein 1 (FLA1) (Arabidopsis thaliana (Mouse-ear cress)).